The sequence spans 122 residues: Large ribosomal subunit protein bL12 (122 aa).

Belongs to the bacterial ribosomal protein bL12 family. As to quaternary structure, homodimer. Part of the ribosomal stalk of the 50S ribosomal subunit. Forms a multimeric L10(L12)X complex, where L10 forms an elongated spine to which 2 to 4 L12 dimers bind in a sequential fashion. Binds GTP-bound translation factors.

Functionally, forms part of the ribosomal stalk which helps the ribosome interact with GTP-bound translation factors. Is thus essential for accurate translation. This Buchnera aphidicola subsp. Schizaphis graminum (strain Sg) protein is Large ribosomal subunit protein bL12.